Reading from the N-terminus, the 622-residue chain is DNA mismatch repair protein MutL (622 aa).

Basic and acidic residues predominate over residues Ser399–Glu414. The tract at residues Ser399 to Pro422 is disordered.

This sequence belongs to the DNA mismatch repair MutL/HexB family.

This protein is involved in the repair of mismatches in DNA. It is required for dam-dependent methyl-directed DNA mismatch repair. May act as a 'molecular matchmaker', a protein that promotes the formation of a stable complex between two or more DNA-binding proteins in an ATP-dependent manner without itself being part of a final effector complex. The protein is DNA mismatch repair protein MutL of Phocaeicola vulgatus (strain ATCC 8482 / DSM 1447 / JCM 5826 / CCUG 4940 / NBRC 14291 / NCTC 11154) (Bacteroides vulgatus).